We begin with the raw amino-acid sequence, 440 residues long: D-serine dehydratase (440 aa).

Residue Lys116 is modified to N6-(pyridoxal phosphate)lysine.

This sequence belongs to the serine/threonine dehydratase family. DsdA subfamily. Monomer. Pyridoxal 5'-phosphate is required as a cofactor.

The enzyme catalyses D-serine = pyruvate + NH4(+). The sequence is that of D-serine dehydratase from Salmonella choleraesuis (strain SC-B67).